The sequence spans 624 residues: Bifunctional 3'-phosphoadenosine 5'-phosphosulfate synthase 1 (624 aa).

N-acetylmethionine is present on Met1. Positions 1–225 (MEIPGSLCKK…VVELLQERDI (225 aa)) are adenylyl-sulfate kinase. Lys12 is subject to N6-acetyllysine. 62-67 (GAGKTT) contributes to the ATP binding site. Adenosine 5'-phosphosulfate is bound by residues 89–92 (DNIR), Phe101, 106–109 (REEN), 132–133 (IS), Lys171, and 184–185 (GF). ATP-binding positions include Cys207, Cys212, 419–422 (QLRN), 521–525 (GRDPA), and Ala563. The segment at 234 to 624 (VKELYVPENK…VEYYKSLEKA (391 aa)) is sulfate adenylyltransferase.

The protein in the N-terminal section; belongs to the APS kinase family. In the C-terminal section; belongs to the sulfate adenylyltransferase family. As to quaternary structure, homodimer. In terms of tissue distribution, expressed in the neonatal brain and in cartilage.

The enzyme catalyses sulfate + ATP + H(+) = adenosine 5'-phosphosulfate + diphosphate. It catalyses the reaction adenosine 5'-phosphosulfate + ATP = 3'-phosphoadenylyl sulfate + ADP + H(+). Its pathway is sulfur metabolism; sulfate assimilation. In terms of biological role, bifunctional enzyme with both ATP sulfurylase and APS kinase activity, which mediates two steps in the sulfate activation pathway. The first step is the transfer of a sulfate group to ATP to yield adenosine 5'-phosphosulfate (APS), and the second step is the transfer of a phosphate group from ATP to APS yielding 3'-phosphoadenylylsulfate (PAPS: activated sulfate donor used by sulfotransferase). In mammals, PAPS is the sole source of sulfate; APS appears to be only an intermediate in the sulfate-activation pathway. Required for normal biosynthesis of sulfated L-selectin ligands in endothelial cells. This Mus musculus (Mouse) protein is Bifunctional 3'-phosphoadenosine 5'-phosphosulfate synthase 1 (Papss1).